Here is a 265-residue protein sequence, read N- to C-terminus: tRNA pseudouridine synthase A (265 aa).

The Nucleophile role is filled by aspartate 53. Tyrosine 111 is a binding site for substrate.

It belongs to the tRNA pseudouridine synthase TruA family. In terms of assembly, homodimer.

The enzyme catalyses uridine(38/39/40) in tRNA = pseudouridine(38/39/40) in tRNA. In terms of biological role, formation of pseudouridine at positions 38, 39 and 40 in the anticodon stem and loop of transfer RNAs. The sequence is that of tRNA pseudouridine synthase A from Acinetobacter baumannii (strain ACICU).